Here is a 63-residue protein sequence, read N- to C-terminus: Cytotoxin homolog S3C2 (63 aa).

4 cysteine pairs are disulfide-bonded: Cys3–Cys22, Cys15–Cys40, Cys44–Cys55, and Cys56–Cys61.

Belongs to the three-finger toxin family. Short-chain subfamily. Orphan group XVI sub-subfamily. As to expression, expressed by the venom gland.

It is found in the secreted. This chain is Cytotoxin homolog S3C2, found in Aspidelaps scutatus (Shield-nose snake).